Consider the following 168-residue polypeptide: Probable chorismate pyruvate-lyase (168 aa).

Arg-75, Ile-114, and Glu-155 together coordinate substrate.

Belongs to the UbiC family.

It localises to the cytoplasm. The catalysed reaction is chorismate = 4-hydroxybenzoate + pyruvate. It participates in cofactor biosynthesis; ubiquinone biosynthesis. Functionally, removes the pyruvyl group from chorismate, with concomitant aromatization of the ring, to provide 4-hydroxybenzoate (4HB) for the ubiquinone pathway. The polypeptide is Probable chorismate pyruvate-lyase (Psychrobacter cryohalolentis (strain ATCC BAA-1226 / DSM 17306 / VKM B-2378 / K5)).